Here is a 233-residue protein sequence, read N- to C-terminus: NADP-dependent glyceraldehyde-3-phosphate dehydrogenase (233 aa).

7 to 8 (NY) is a substrate binding site. NADP(+) contacts are provided by lysine 30 and serine 33. NAD(+) is bound at residue 83 to 87 (GGDTG). Residue glutamate 102 is the Proton acceptor of the active site. Residue 135-137 (RCT) coordinates substrate. Residue cysteine 136 is the Nucleophile of the active site. The NADP(+) site is built by glutamate 180 and glutamate 229.

It belongs to the aldehyde dehydrogenase family.

The protein localises to the cytoplasm. It catalyses the reaction D-glyceraldehyde 3-phosphate + NADP(+) + H2O = (2R)-3-phosphoglycerate + NADPH + 2 H(+). Important as a means of generating NADPH for biosynthetic reactions. In Scenedesmus vacuolatus (Green alga), this protein is NADP-dependent glyceraldehyde-3-phosphate dehydrogenase (GapN).